A 90-amino-acid polypeptide reads, in one-letter code: Small ribosomal subunit protein uS15 (90 aa).

This sequence belongs to the universal ribosomal protein uS15 family. Part of the 30S ribosomal subunit. Forms a bridge to the 50S subunit in the 70S ribosome, contacting the 23S rRNA.

Functionally, one of the primary rRNA binding proteins, it binds directly to 16S rRNA where it helps nucleate assembly of the platform of the 30S subunit by binding and bridging several RNA helices of the 16S rRNA. Forms an intersubunit bridge (bridge B4) with the 23S rRNA of the 50S subunit in the ribosome. This chain is Small ribosomal subunit protein uS15, found in Wolbachia sp. subsp. Drosophila simulans (strain wRi).